The chain runs to 59 residues: Large ribosomal subunit protein uL30 (59 aa).

It belongs to the universal ribosomal protein uL30 family. As to quaternary structure, part of the 50S ribosomal subunit.

The chain is Large ribosomal subunit protein uL30 from Photorhabdus laumondii subsp. laumondii (strain DSM 15139 / CIP 105565 / TT01) (Photorhabdus luminescens subsp. laumondii).